The chain runs to 231 residues: Large ribosomal subunit protein uL1 (231 aa).

Belongs to the universal ribosomal protein uL1 family. Part of the 50S ribosomal subunit.

Binds directly to 23S rRNA. The L1 stalk is quite mobile in the ribosome, and is involved in E site tRNA release. In terms of biological role, protein L1 is also a translational repressor protein, it controls the translation of the L11 operon by binding to its mRNA. This is Large ribosomal subunit protein uL1 from Pseudomonas syringae pv. tomato (strain ATCC BAA-871 / DC3000).